The sequence spans 63 residues: MVCRFVHHSRVIFISIYDFLSTKGKKNMYNYTQEKKTKQKNTFTQASIYYENFFESYRTISCL.

This is an uncharacterized protein from Saccharomyces cerevisiae (strain ATCC 204508 / S288c) (Baker's yeast).